The following is a 428-amino-acid chain: GTPase Obg (428 aa).

An Obg domain is found at 1–158; that stretch reads MFVDQTKIDV…RTLRLELKVL (158 aa). An OBG-type G domain is found at 159–328; sequence ADVGLVGFPS…LMGKTADLVE (170 aa). Residues 165–172, 190–194, 212–215, 282–285, and 309–311 each bind GTP; these read GFPSVGKS, FTTLT, DLPG, TQMD, and SSV. Positions 172 and 192 each coordinate Mg(2+). Residues 350 to 428 enclose the OCT domain; it reads YKKPEDEGFK…IADFTFEFVD (79 aa).

The protein belongs to the TRAFAC class OBG-HflX-like GTPase superfamily. OBG GTPase family. Monomer. Mg(2+) is required as a cofactor.

Its subcellular location is the cytoplasm. Its function is as follows. An essential GTPase which binds GTP, GDP and possibly (p)ppGpp with moderate affinity, with high nucleotide exchange rates and a fairly low GTP hydrolysis rate. Plays a role in control of the cell cycle, stress response, ribosome biogenesis and in those bacteria that undergo differentiation, in morphogenesis control. This Lactobacillus johnsonii (strain CNCM I-12250 / La1 / NCC 533) protein is GTPase Obg.